The chain runs to 240 residues: Myomodulin neuropeptides 2 (240 aa).

A signal peptide spans 1 to 23; that stretch reads MWKILETCSCFLVVAVLSGLGKA. The disordered stretch occupies residues 23–44; sequence AQPESFSGSAVTDDSTSGANKR. Positions 24-44 are excised as a propeptide; the sequence is QPESFSGSAVTDDSTSGANKR. Positions 26 to 41 are enriched in polar residues; sequence ESFSGSAVTDDSTSGA. Leucine amide is present on residues L51 and L60. Propeptides (connecting peptide) lie at residues 72-81 and 84-112; these read SGHQVPMLRA and GSPDTSGRLDANELYAVLSAILDEPRDQS. A81 bears the Alanine amide mark. Q115 carries the post-translational modification Pyrrolidone carboxylic acid. At Y121 the chain carries Tyrosine amide. 10 consecutive propeptides (connecting peptide) follow at residues 124-147, 124-148, 124-149, 124-168, 131-168, 149-168, 150-168, 151-168, 171-190, and 171-199; these read DNNGVARDLLDALASDGESSSNFD, DNNGVARDLLDALASDGESSSNFDL, DNNGVARDLLDALASDGESSSNFDLL, DNNG…GGRY, DLLDALASDGESSSNFDLLSSLNNGPSYFRPAPRGGRY, LSSLNNGPSYFRPAPRGGRY, SSLNNGPSYFRPAPRGGRY, SLNNGPSYFRPAPRGGRY, SLPDAGPADYPSLEDYLVQS, and SLPDAGPADYPSLEDYLVQSRQFARPYSS. I207 is subject to Isoleucine amide. Residues 210 to 219 constitute a propeptide that is removed on maturation; that stretch reads FSGSPRLQAK. Residues 212–240 form a disordered region; sequence GSPRLQAKAVPRPRIGRQESQMREAKSAE. An Isoleucine amide modification is found at I226. Residues 227–240 constitute a propeptide that is removed on maturation; that stretch reads GRQESQMREAKSAE. Residues 227 to 240 show a composition bias toward basic and acidic residues; the sequence is GRQESQMREAKSAE.

As to expression, expressed in the pedal-buccal projection neurons in the pedal ganglion.

The protein localises to the secreted. Its function is as follows. MMG2-DPs (Myomodulin gene 2-derived peptides) bias egestive feeding programs toward ingestive ones, and modulate accessory radula closer (ARC) muscle contractions. The sequence is that of Myomodulin neuropeptides 2 (MMG2) from Aplysia californica (California sea hare).